Consider the following 387-residue polypeptide: Succinyl-diaminopimelate desuccinylase (387 aa).

Position 74 (H74) interacts with Zn(2+). D76 is an active-site residue. D107 serves as a coordination point for Zn(2+). The active-site Proton acceptor is E142. Zn(2+)-binding residues include E143, E171, and H360.

Belongs to the peptidase M20A family. DapE subfamily. As to quaternary structure, homodimer. The cofactor is Zn(2+). It depends on Co(2+) as a cofactor.

It carries out the reaction N-succinyl-(2S,6S)-2,6-diaminopimelate + H2O = (2S,6S)-2,6-diaminopimelate + succinate. It participates in amino-acid biosynthesis; L-lysine biosynthesis via DAP pathway; LL-2,6-diaminopimelate from (S)-tetrahydrodipicolinate (succinylase route): step 3/3. Catalyzes the hydrolysis of N-succinyl-L,L-diaminopimelic acid (SDAP), forming succinate and LL-2,6-diaminopimelate (DAP), an intermediate involved in the bacterial biosynthesis of lysine and meso-diaminopimelic acid, an essential component of bacterial cell walls. This chain is Succinyl-diaminopimelate desuccinylase, found in Rhodopseudomonas palustris (strain BisA53).